Consider the following 236-residue polypeptide: UPF0257 lipoprotein YnfC (236 aa).

An N-terminal signal peptide occupies residues 1 to 16 (MKYKLLPCLLAILLTG). Cysteine 17 carries the N-palmitoyl cysteine lipid modification. Cysteine 17 is lipidated: S-diacylglycerol cysteine.

It belongs to the UPF0257 family.

It is found in the cell membrane. The sequence is that of UPF0257 lipoprotein YnfC from Escherichia coli O127:H6 (strain E2348/69 / EPEC).